A 127-amino-acid polypeptide reads, in one-letter code: Profilin (127 aa).

This sequence belongs to the profilin family. As to quaternary structure, occurs in many kinds of cells as a complex with monomeric actin in a 1:1 ratio.

It localises to the cytoplasm. It is found in the cytoskeleton. Functionally, binds to actin and affects the structure of the cytoskeleton. At high concentrations, profilin prevents the polymerization of actin, whereas it enhances it at low concentrations. By binding to PIP2, it inhibits the formation of IP3 and DG. In S.pombe, it is essential for cytokinesis. This is Profilin (cdc3) from Schizosaccharomyces pombe (strain 972 / ATCC 24843) (Fission yeast).